Consider the following 238-residue polypeptide: Large ribosomal subunit protein uL1 (238 aa).

It belongs to the universal ribosomal protein uL1 family. In terms of assembly, part of the 50S ribosomal subunit.

Its function is as follows. Binds directly to 23S rRNA. The L1 stalk is quite mobile in the ribosome, and is involved in E site tRNA release. In terms of biological role, protein L1 is also a translational repressor protein, it controls the translation of the L11 operon by binding to its mRNA. The protein is Large ribosomal subunit protein uL1 of Trichormus variabilis (strain ATCC 29413 / PCC 7937) (Anabaena variabilis).